The chain runs to 109 residues: Sperm-specific class P protein 10 (109 aa).

Residues serine 2–alanine 109 form the MSP domain.

In terms of tissue distribution, expressed at higher level in testis.

The chain is Sperm-specific class P protein 10 (ssp-10) from Caenorhabditis elegans.